The primary structure comprises 222 residues: Prolactin-2C5 (222 aa).

Residues 1-29 (MLPSLIQPCSWILLLLLVNSSLLWKNVAS) form the signal peptide. A disulfide bridge links Cys-33 with Cys-40. Asn-57 is a glycosylation site (N-linked (GlcNAc...) asparagine). 2 disulfide bridges follow: Cys-87-Cys-197 and Cys-214-Cys-222.

The protein belongs to the somatotropin/prolactin family. In terms of processing, N-glycosylated and sialylated. Expressed in placenta (at protein level). Expressed in the tail hair follicle, with highest expression detected in the keratinocytes of the outer root sheath. Expressed in ear skin with lesser amounts in small intestine. Not detected in brain at 18 dpc, postnatal day 25 or postnatal day 55.

Its subcellular location is the secreted. The chain is Prolactin-2C5 from Mus musculus (Mouse).